Here is a 167-residue protein sequence, read N- to C-terminus: Crossover junction endodeoxyribonuclease RuvC (167 aa).

Catalysis depends on residues Asp-8, Glu-68, and Asp-140. 3 residues coordinate Mg(2+): Asp-8, Glu-68, and Asp-140.

It belongs to the RuvC family. As to quaternary structure, homodimer which binds Holliday junction (HJ) DNA. The HJ becomes 2-fold symmetrical on binding to RuvC with unstacked arms; it has a different conformation from HJ DNA in complex with RuvA. In the full resolvosome a probable DNA-RuvA(4)-RuvB(12)-RuvC(2) complex forms which resolves the HJ. Mg(2+) serves as cofactor.

The protein resides in the cytoplasm. It catalyses the reaction Endonucleolytic cleavage at a junction such as a reciprocal single-stranded crossover between two homologous DNA duplexes (Holliday junction).. Functionally, the RuvA-RuvB-RuvC complex processes Holliday junction (HJ) DNA during genetic recombination and DNA repair. Endonuclease that resolves HJ intermediates. Cleaves cruciform DNA by making single-stranded nicks across the HJ at symmetrical positions within the homologous arms, yielding a 5'-phosphate and a 3'-hydroxyl group; requires a central core of homology in the junction. The consensus cleavage sequence is 5'-(A/T)TT(C/G)-3'. Cleavage occurs on the 3'-side of the TT dinucleotide at the point of strand exchange. HJ branch migration catalyzed by RuvA-RuvB allows RuvC to scan DNA until it finds its consensus sequence, where it cleaves and resolves the cruciform DNA. The chain is Crossover junction endodeoxyribonuclease RuvC from Sinorhizobium medicae (strain WSM419) (Ensifer medicae).